A 3473-amino-acid chain; its full sequence is Genome polyprotein (3473 aa).

A coiled-coil region spans residues 514-604 (EVQDALEKSM…RNDIEALKKK (91 aa)). 2 disordered regions span residues 602–644 (KKKP…SEAQ) and 1278–1306 (YLADEQPTTSAPRTSIVNTEDDPPTEGEI). Polar residues-rich tracts occupy residues 607–622 (QSVTPLPSPSGNSGTA) and 1278–1295 (YLADEQPTTSAPRTSIVN). 2 consecutive transmembrane segments (helical) span residues 1496-1516 (DKWIWAALASILVGAALLHYY) and 1595-1615 (MSSLLTILSVVASLVMWGKIP). The region spanning 1751-1917 (LELMNESYTY…PDVPKNEANP (167 aa)) is the SF3 helicase domain. 1777 to 1784 (GAPGVGKS) is a binding site for ATP. The chain crosses the membrane as a helical span at residues 2363-2383 (ILLAIGASVAVAGVAVGAVIL). The span at 2394-2404 (EDEEIEGEEGE) shows a compositional bias: acidic residues. Disordered stretches follow at residues 2394 to 2415 (EDEEIEGEEGETQASGAHESDG) and 2438 to 2465 (VAEAHEEKDAEKPRKSGNPTRKSYLGLS). Over residues 2438–2451 (VAEAHEEKDAEKPR) the composition is skewed to basic and acidic residues. In terms of domain architecture, Peptidase C3 spans 2632–2850 (GVDRDLSMTN…YAETLTQEHL (219 aa)). Active-site for picornain 3C-like protease activity residues include His-2680, Glu-2717, and Cys-2811. The 132-residue stretch at 3155–3286 (TKGFAGDYSK…SVHEEFLDVY (132 aa)) folds into the RdRp catalytic domain.

Specific enzymatic cleavages by picornain 3C-like protease in vivo yield mature proteins. Picornain 3C-like protease is autocatalytically processed.

It is found in the virion. Its subcellular location is the host membrane. The catalysed reaction is RNA(n) + a ribonucleoside 5'-triphosphate = RNA(n+1) + diphosphate. Picornain 3C-like protease is a thiol protease that probably cleaves the polyprotein. This Oryza sativa (Rice) protein is Genome polyprotein.